The sequence spans 1072 residues: Guanylyl cyclase C (1072 aa).

An N-terminal signal peptide occupies residues 1–19 (MTSLLGLAVRLLLFQPALM). Residues 20–433 (VFWASQVRQN…VPGLGPQILM (414 aa)) are Extracellular-facing. Asn-32, Asn-75, Asn-79, Asn-179, Asn-188, Asn-195, Asn-284, Asn-307, Asn-345, and Asn-402 each carry an N-linked (GlcNAc...) asparagine glycan. Residues 434–454 (IAVFTLTGILVVLLLIALLVL) traverse the membrane as a helical segment. Residues 455–1072 (RKYRRDHALR…NNSDHDSTYF (618 aa)) lie on the Cytoplasmic side of the membrane. The Protein kinase domain occupies 489–748 (LKIDDDRRRD…KIESTLAKIF (260 aa)). The 131-residue stretch at 823–953 (TIYFSDIVGF…DTVNTASRME (131 aa)) folds into the Guanylate cyclase domain.

The protein belongs to the adenylyl cyclase class-4/guanylyl cyclase family. As to quaternary structure, homotrimer. Interacts via its C-terminal region with NHERF4. Interacts with the lectin chaperone VIP36. In terms of processing, glycosylation at Asn-75 and/or Asn-79 is required for interaction with VIP36 while glycosylation at Asn-345 and Asn-402 modulates ligand-mediated GC-C activation.

The protein localises to the cell membrane. It is found in the endoplasmic reticulum membrane. It carries out the reaction GTP = 3',5'-cyclic GMP + diphosphate. In terms of biological role, guanylyl cyclase that catalyzes synthesis of cyclic GMP (cGMP) from GTP. The sequence is that of Guanylyl cyclase C (Gucy2c) from Mus musculus (Mouse).